The following is a 115-amino-acid chain: Large ribosomal subunit protein P2y (115 aa).

The interval 63 to 115 is disordered; sequence ASVPSGGGGGVAVASATSGGGGGGGASAAESKKEEKKEEKEESDDDMGFSLFE. Residues 92–102 are compositionally biased toward basic and acidic residues; that stretch reads ESKKEEKKEEK. A Phosphoserine modification is found at Ser-105.

Belongs to the eukaryotic ribosomal protein P1/P2 family. As to quaternary structure, P1 and P2 exist as dimers at the large ribosomal subunit. Post-translationally, phosphorylated.

Plays an important role in the elongation step of protein synthesis. This is Large ribosomal subunit protein P2y (RPP2B) from Arabidopsis thaliana (Mouse-ear cress).